Here is a 266-residue protein sequence, read N- to C-terminus: MTPQDYIGHHLNNLQLDLRTFSLVDPHNHTATFWTLNIDSMFFSVVLGLLFLAMFRSVAKKATSGVPGKFQTFIEMIIGFVHGSVKDMYHGKSKVIAPLALTVFVWVFLMNLMDLLPIDLLPYIGEHIFGLPALRVVPSADVNITLSMALGVFILIIFYSIKMKGVGGFVKELTMQPFNHWAFIPVNLILEGVSLLSKPVSLGLRLFGNMYAGELIFILIAGLLPWWSQWVLNVPWAIFHILIITLQAFIFMVLTIVYLSMASEEH.

The next 5 membrane-spanning stretches (helical) occupy residues 33 to 53 (FWTL…LFLA), 95 to 115 (VIAP…LMDL), 141 to 161 (DVNI…FYSI), 206 to 226 (LFGN…LLPW), and 237 to 257 (AIFH…LTIV).

Belongs to the ATPase A chain family. In terms of assembly, F-type ATPases have 2 components, CF(1) - the catalytic core - and CF(0) - the membrane proton channel. CF(1) has five subunits: alpha(3), beta(3), gamma(1), delta(1), epsilon(1). CF(0) has three main subunits: a(1), b(2) and c(9-12). The alpha and beta chains form an alternating ring which encloses part of the gamma chain. CF(1) is attached to CF(0) by a central stalk formed by the gamma and epsilon chains, while a peripheral stalk is formed by the delta and b chains.

The protein resides in the cell inner membrane. Its function is as follows. Key component of the proton channel; it plays a direct role in the translocation of protons across the membrane. This is ATP synthase subunit a from Klebsiella pneumoniae subsp. pneumoniae (strain ATCC 700721 / MGH 78578).